The chain runs to 232 residues: 2-C-methyl-D-erythritol 4-phosphate cytidylyltransferase (232 aa).

The protein belongs to the IspD/TarI cytidylyltransferase family. IspD subfamily.

It carries out the reaction 2-C-methyl-D-erythritol 4-phosphate + CTP + H(+) = 4-CDP-2-C-methyl-D-erythritol + diphosphate. Its pathway is isoprenoid biosynthesis; isopentenyl diphosphate biosynthesis via DXP pathway; isopentenyl diphosphate from 1-deoxy-D-xylulose 5-phosphate: step 2/6. In terms of biological role, catalyzes the formation of 4-diphosphocytidyl-2-C-methyl-D-erythritol from CTP and 2-C-methyl-D-erythritol 4-phosphate (MEP). The protein is 2-C-methyl-D-erythritol 4-phosphate cytidylyltransferase of Stenotrophomonas maltophilia (strain R551-3).